Here is a 453-residue protein sequence, read N- to C-terminus: Adenosylmethionine-8-amino-7-oxononanoate aminotransferase (453 aa).

118-119 (GS) is a binding site for pyridoxal 5'-phosphate. Tyr-151 lines the substrate pocket. Asp-258 is a binding site for pyridoxal 5'-phosphate. The substrate site is built by Lys-287, Gly-322, and Arg-417. N6-(pyridoxal phosphate)lysine is present on Lys-287.

Belongs to the class-III pyridoxal-phosphate-dependent aminotransferase family. BioA subfamily. Homodimer. Requires pyridoxal 5'-phosphate as cofactor.

Its subcellular location is the cytoplasm. The catalysed reaction is (8S)-8-amino-7-oxononanoate + S-adenosyl-L-methionine = S-adenosyl-4-methylsulfanyl-2-oxobutanoate + (7R,8S)-7,8-diammoniononanoate. It functions in the pathway cofactor biosynthesis; biotin biosynthesis; 7,8-diaminononanoate from 8-amino-7-oxononanoate (SAM route): step 1/1. In terms of biological role, catalyzes the transfer of the alpha-amino group from S-adenosyl-L-methionine (SAM) to 7-keto-8-aminopelargonic acid (KAPA) to form 7,8-diaminopelargonic acid (DAPA). It is the only aminotransferase known to utilize SAM as an amino donor. The protein is Adenosylmethionine-8-amino-7-oxononanoate aminotransferase of Geobacter sulfurreducens (strain ATCC 51573 / DSM 12127 / PCA).